The primary structure comprises 397 residues: 1-deoxy-D-xylulose 5-phosphate reductoisomerase (397 aa).

Residues threonine 17, glycine 18, serine 19, isoleucine 20, alanine 45, asparagine 47, and asparagine 130 each coordinate NADPH. Lysine 131 lines the 1-deoxy-D-xylulose 5-phosphate pocket. Glutamate 132 is a binding site for NADPH. Mn(2+) is bound at residue aspartate 156. Serine 157, glutamate 158, serine 182, and histidine 205 together coordinate 1-deoxy-D-xylulose 5-phosphate. A Mn(2+)-binding site is contributed by glutamate 158. Glycine 211 contributes to the NADPH binding site. Positions 218, 223, 224, and 227 each coordinate 1-deoxy-D-xylulose 5-phosphate. Glutamate 227 is a Mn(2+) binding site.

The protein belongs to the DXR family. Requires Mg(2+) as cofactor. The cofactor is Mn(2+).

It catalyses the reaction 2-C-methyl-D-erythritol 4-phosphate + NADP(+) = 1-deoxy-D-xylulose 5-phosphate + NADPH + H(+). It functions in the pathway isoprenoid biosynthesis; isopentenyl diphosphate biosynthesis via DXP pathway; isopentenyl diphosphate from 1-deoxy-D-xylulose 5-phosphate: step 1/6. In terms of biological role, catalyzes the NADPH-dependent rearrangement and reduction of 1-deoxy-D-xylulose-5-phosphate (DXP) to 2-C-methyl-D-erythritol 4-phosphate (MEP). This is 1-deoxy-D-xylulose 5-phosphate reductoisomerase from Agrobacterium fabrum (strain C58 / ATCC 33970) (Agrobacterium tumefaciens (strain C58)).